Here is a 204-residue protein sequence, read N- to C-terminus: Ribosomal RNA small subunit methyltransferase G (204 aa).

Residues G74, L79, 125–126, and R138 contribute to the S-adenosyl-L-methionine site; that span reads AY.

The protein belongs to the methyltransferase superfamily. RNA methyltransferase RsmG family.

It localises to the cytoplasm. Functionally, specifically methylates the N7 position of a guanine in 16S rRNA. The chain is Ribosomal RNA small subunit methyltransferase G from Brachyspira hyodysenteriae (strain ATCC 49526 / WA1).